The primary structure comprises 169 residues: MKPSSSNSRSKGHAKARRKTREELDQEARDRKRQKKRRGHAPGSRAAGGNTTSGSKGQNAPKDPRIGSKTPIPLGVAEKVTKQHKPKSEKPMLSPQAELELLETDERLDALLERLEAGETLRAEEQSWVDVKLDRIDELMQKLGLSYDDDEEEEEDEKQEDMMRLLRGN.

Disordered stretches follow at residues Met1–Leu99 and Ser146–Asn169. Residues Ser10–Lys19 show a composition bias toward basic residues. Basic and acidic residues predominate over residues Thr20–Asp30. The span at Arg31–His40 shows a compositional bias: basic residues. A compositionally biased stretch (polar residues) spans Gly49–Gln58. The segment covering Tyr147–Gln159 has biased composition (acidic residues). Positions Glu160 to Asn169 are enriched in basic and acidic residues.

Belongs to the YihI family. Interacts with Der.

A GTPase-activating protein (GAP) that modifies Der/EngA GTPase function. May play a role in ribosome biogenesis. This chain is Der GTPase-activating protein YihI, found in Escherichia coli O45:K1 (strain S88 / ExPEC).